The primary structure comprises 526 residues: Seipin-2 (526 aa).

Residues 33 to 77 form a disordered region; the sequence is PIRSNSHQPSSLLRRRKSAHRRDLISSDIETEPSSSSDGFDVGEK. Residues 58 to 70 show a composition bias toward low complexity; that stretch reads SSDIETEPSSSSD. A run of 4 helical transmembrane segments spans residues 195 to 215, 224 to 243, 258 to 278, and 483 to 503; these read SLLT…FDPF, FLMA…MNPF, FGWG…LLVS, and LFVW…LVCC.

It belongs to the seipin family. As to expression, expressed in seeds, seedlings, leaves, stems and roots. Not detected in flowers.

Its subcellular location is the endoplasmic reticulum membrane. Involved in lipid metabolism and lipid droplet (LD) morphology, number, and size. Supports the formation of small-sized LDs and modulates triacylglycerol accumulation. Induces probably a reorganization of the endoplasmic reticulum into LD-forming domains. In Arabidopsis thaliana (Mouse-ear cress), this protein is Seipin-2.